The sequence spans 61 residues: Probable pancreatic secretory proteinase inhibitor (61 aa).

In terms of domain architecture, Kazal-like spans 6–61; it reads LYRKPSCGEMSAMHACPMNFAPVCGTDGNTYPNECSLCFQRQNTKTDILITKDDRC. 3 cysteine pairs are disulfide-bonded: Cys-12/Cys-43, Cys-21/Cys-40, and Cys-29/Cys-61.

The protein resides in the secreted. The sequence is that of Probable pancreatic secretory proteinase inhibitor from Anguilla anguilla (European freshwater eel).